A 241-amino-acid chain; its full sequence is Phosphoadenosine 5'-phosphosulfate reductase (241 aa).

The active-site Nucleophile; cysteine thiosulfonate intermediate is the cysteine 235.

This sequence belongs to the PAPS reductase family. CysH subfamily.

It is found in the cytoplasm. The catalysed reaction is [thioredoxin]-disulfide + sulfite + adenosine 3',5'-bisphosphate + 2 H(+) = [thioredoxin]-dithiol + 3'-phosphoadenylyl sulfate. It participates in sulfur metabolism; hydrogen sulfide biosynthesis; sulfite from sulfate: step 3/3. Its function is as follows. Catalyzes the formation of sulfite from phosphoadenosine 5'-phosphosulfate (PAPS) using thioredoxin as an electron donor. This chain is Phosphoadenosine 5'-phosphosulfate reductase, found in Xanthomonas campestris pv. campestris (strain 8004).